The chain runs to 2234 residues: RNA-directed RNA polymerase L (2234 aa).

Residues 26-283 (ITVVTSQTEM…INLSDEKLSC (258 aa)) form an endonuclease region. Glu-51, Asp-89, and Glu-102 together coordinate Mn(2+). Lys-115 is an active-site residue. Residues 879-891 (KRDDHMKDSEDSK) show a composition bias toward basic and acidic residues. Disordered regions lie at residues 879–898 (KRDDHMKDSEDSKQNLSSDL) and 927–949 (KLKEKTEARQSSSGSSLKNQQKR). Polar residues predominate over residues 935–945 (RQSSSGSSLKN). The region spanning 1184–1383 (MEMKMSVNLG…FISSKFNKFV (200 aa)) is the RdRp catalytic domain. Asp-1342 serves as a coordination point for Mg(2+).

Belongs to the Bunyavirales RNA polymerase family. Homomultimer; the oligomeric structure is essential for the polymerase activity. Interacts with nucleoprotein N. Interacts with protein Z; this interaction inhibits viral transcription and replication, Z partially blocks the product exit tunnel for the releasing nascent RNA product. It depends on Mn(2+) as a cofactor. Mg(2+) serves as cofactor.

The protein resides in the virion. It is found in the host cytoplasm. The enzyme catalyses RNA(n) + a ribonucleoside 5'-triphosphate = RNA(n+1) + diphosphate. RNA-dependent RNA polymerase, which is responsible for the replication and transcription of the viral RNA genome using antigenomic RNA as an intermediate. During transcription, synthesizes subgenomic RNAs and assures their capping by a cap-snatching mechanism, which involves the endonuclease activity cleaving the host capped pre-mRNAs. These short capped RNAs are then used as primers for viral transcription. The 3'-end of subgenomic mRNAs molecules are heterogeneous and not polyadenylated. The replicase function is to direct synthesis of antigenomic and genomic RNA which are encapsidated and non capped. As a consequence of the use of the same enzyme for both transcription and replication, these mechanisms need to be well coordinated. These processes may be regulated by proteins N and Z in a dose-dependent manner. Z protein inhibits the viral polymerase L und thus the viral transcription and RNA synthesis. The protein is RNA-directed RNA polymerase L of Bolomys (OLVV).